Consider the following 353-residue polypeptide: Dimethylsulfoniopropionate lyase 2 (353 aa).

Catalysis depends on proton donor/acceptor residues C125 and C274. The segment at 326–353 is disordered; that stretch reads DPNETDVSKGRPTKAEHRFGPEFEEMLQ. The span at 331 to 346 shows a compositional bias: basic and acidic residues; the sequence is DVSKGRPTKAEHRFGP.

This sequence belongs to the aspartate/glutamate racemases family. ALMA1 subfamily. In terms of assembly, homotetramer.

It carries out the reaction S,S-dimethyl-beta-propiothetin = acrylate + dimethyl sulfide + H(+). In terms of biological role, mediates cleavage of dimethylsulfoniopropionate (DMSP) into dimethyl sulfide (DMS) and acrylate. DMS is the principal form by which sulfur is transported from oceans to the atmosphere and is a key component of the ocean sulfur cycle. The protein is Dimethylsulfoniopropionate lyase 2 of Emiliania huxleyi (strain CCMP1516).